A 366-amino-acid polypeptide reads, in one-letter code: tRNA-specific 2-thiouridylase MnmA (366 aa).

ATP is bound by residues 6–13 (GLSGGVDS) and Met32. Cys96 (nucleophile) is an active-site residue. The cysteines at positions 96 and 196 are disulfide-linked. Gly120 provides a ligand contact to ATP. An interaction with tRNA region spans residues 146-148 (KDQ). Catalysis depends on Cys196, which acts as the Cysteine persulfide intermediate. Positions 302 to 303 (RY) are interaction with tRNA.

The protein belongs to the MnmA/TRMU family.

The protein resides in the cytoplasm. The enzyme catalyses S-sulfanyl-L-cysteinyl-[protein] + uridine(34) in tRNA + AH2 + ATP = 2-thiouridine(34) in tRNA + L-cysteinyl-[protein] + A + AMP + diphosphate + H(+). Catalyzes the 2-thiolation of uridine at the wobble position (U34) of tRNA, leading to the formation of s(2)U34. The protein is tRNA-specific 2-thiouridylase MnmA of Treponema denticola (strain ATCC 35405 / DSM 14222 / CIP 103919 / JCM 8153 / KCTC 15104).